The primary structure comprises 811 residues: Phenylalanine--tRNA ligase beta subunit (811 aa).

Residues 39 to 151 (RTWAAGVVVG…AGLQAGQPVG (113 aa)) form the tRNA-binding domain. The B5 domain maps to 409 to 495 (EPEHSITLRL…RLYGYDNFGE (87 aa)). Asp473, Asp479, Glu482, and Glu483 together coordinate Mg(2+). The 94-residue stretch at 717-810 (SSFPASDRDL…LVERFRVTLR (94 aa)) folds into the FDX-ACB domain.

Belongs to the phenylalanyl-tRNA synthetase beta subunit family. Type 1 subfamily. Tetramer of two alpha and two beta subunits. Mg(2+) serves as cofactor.

It localises to the cytoplasm. It catalyses the reaction tRNA(Phe) + L-phenylalanine + ATP = L-phenylalanyl-tRNA(Phe) + AMP + diphosphate + H(+). The polypeptide is Phenylalanine--tRNA ligase beta subunit (Synechococcus sp. (strain ATCC 27144 / PCC 6301 / SAUG 1402/1) (Anacystis nidulans)).